The chain runs to 357 residues: GTPase Obg (357 aa).

Positions 1 to 159 constitute an Obg domain; sequence MKFVDEAFID…RNLKLELKVL (159 aa). The 175-residue stretch at 160–334 folds into the OBG-type G domain; that stretch reads ADVGLLGMPN…LIQAIYQHVR (175 aa). GTP contacts are provided by residues 166 to 173, 191 to 195, 213 to 216, 284 to 287, and 315 to 317; these read GMPNAGKS, FTTLH, DIPG, NKLD, and SAL. Mg(2+)-binding residues include Ser173 and Thr193.

It belongs to the TRAFAC class OBG-HflX-like GTPase superfamily. OBG GTPase family. Monomer. Mg(2+) serves as cofactor.

The protein resides in the cytoplasm. Its function is as follows. An essential GTPase which binds GTP, GDP and possibly (p)ppGpp with moderate affinity, with high nucleotide exchange rates and a fairly low GTP hydrolysis rate. Plays a role in control of the cell cycle, stress response, ribosome biogenesis and in those bacteria that undergo differentiation, in morphogenesis control. In Paracidovorax citrulli (strain AAC00-1) (Acidovorax citrulli), this protein is GTPase Obg.